Here is a 515-residue protein sequence, read N- to C-terminus: Bifunctional purine biosynthesis protein PurH (515 aa).

One can recognise an MGS-like domain in the interval 1–145; sequence MTKRALISVS…KNHASVTVVV (145 aa).

It belongs to the PurH family.

The catalysed reaction is (6R)-10-formyltetrahydrofolate + 5-amino-1-(5-phospho-beta-D-ribosyl)imidazole-4-carboxamide = 5-formamido-1-(5-phospho-D-ribosyl)imidazole-4-carboxamide + (6S)-5,6,7,8-tetrahydrofolate. It carries out the reaction IMP + H2O = 5-formamido-1-(5-phospho-D-ribosyl)imidazole-4-carboxamide. Its pathway is purine metabolism; IMP biosynthesis via de novo pathway; 5-formamido-1-(5-phospho-D-ribosyl)imidazole-4-carboxamide from 5-amino-1-(5-phospho-D-ribosyl)imidazole-4-carboxamide (10-formyl THF route): step 1/1. It functions in the pathway purine metabolism; IMP biosynthesis via de novo pathway; IMP from 5-formamido-1-(5-phospho-D-ribosyl)imidazole-4-carboxamide: step 1/1. This chain is Bifunctional purine biosynthesis protein PurH, found in Streptococcus thermophilus (strain ATCC BAA-491 / LMD-9).